The sequence spans 162 residues: Small ribosomal subunit protein uS5 (162 aa).

Positions 11–74 (LTDRVVHISR…EQAKKNLIKV (64 aa)) constitute an S5 DRBM domain.

The protein belongs to the universal ribosomal protein uS5 family. As to quaternary structure, part of the 30S ribosomal subunit. Contacts proteins S4 and S8.

In terms of biological role, with S4 and S12 plays an important role in translational accuracy. Located at the back of the 30S subunit body where it stabilizes the conformation of the head with respect to the body. In Pelobacter propionicus (strain DSM 2379 / NBRC 103807 / OttBd1), this protein is Small ribosomal subunit protein uS5.